A 1218-amino-acid chain; its full sequence is MSKLKVVGEKSLTNSSRVVGLLAQLEKINTDSTESDTARYVTSKILHLAQSQEKTRREMTTKGSTGMEVLLSTLENTKDLQTVLNILSILIELVSSGGGRRASFLVAKGGSQILLQLLMNASKDSPPHEEVMVQTHSILAKIGPKDKKFGVKARVNGALTVTLNLVKQHFQNYRLVLPCLQLLRVYSTNSVNSVSLGKNGVVELMFKIIGPFSKKNSGLMKVALDTLAALLKSKTNARRAVDRGYVQVLLTIYVDWHRHDNRHRNMLIRKGILQSLKSVTNIKLGRKAFIDANGMKILYNTSQECLAVRTLDPLVNTSSLIMRKCFPKNRLPLPTIKSSFHFQLPIIPVTGPVAQLYSLPPEVDDVVDESDDNDDIDLEVENELENEDDLDQSFKNDDIETDINKLRPQQVPGRTIEELKMYEHLFPELVDDFQDYELISKEPKPFVFEGKARGPIVVPTAGEEVPGNSGSVKKGVVMKERASPKGEEAKEDPKGHDRTLPQQLGGQSRVAPSAHSFNNDLVKALDRITLQNVPSQVASGLNAGMRKDFGLPLTVLSCTKACPHVAKCGSTLFEGRTVHLGKLCCTGVETEDDEDTESHSSTEQAPSVEASDGPTLHDPDLYIEIVKNTKSVPEYSEVAYPDYFGHIPPPFKEPILERPYGVQRTKIAQDIERLIHQNDIIDRVVYDLDNPTYTTPEEGDTLKFNSKFESGNLRKVIQIRKSEYDLILNSDINSNHYHQWFYFEVSGMRPGVAYRFNIINCEKSNSQFNYGMQPLMYSVQEALNARPWWIRMGTDICYYKNHFSRSSVAAGGQKGKSYYTITFTVNFPHKDDVCYFAYHYPYTYSTLQMHLQKLESAHNPQQIYFRKDVLCETLSGNICPLVTITAMPESNYYEHICQFRTRPYIFLSARVHPGETNASWVMKGTLEYLMSNSPTAQSLRESYIFKIVPMLNPDGVINGNHRCSLSGEDLNRQWQSPNPELHPTIYHAKGLLQYLAAVKRLPLVYCDYHGHSRKKNVFMYGCSIKETVWHTHDNSASCDIVEDMGYRTLPKILSHIAPAFCMSSCSFVVEKSKESTARVVVWREIGVQRSYTMESTLCGCDQGRYKGLQIGTRELEEMGAKFCVGLLRLKRLTSSLEYNLPSNLLDFENDLIESSCKVTSPTTYVLDEDEPRFLEEVDYSAESNDELDVELAENTGDYEPSAQEEALSDSEVSRTHLI.

2 disordered regions span residues 476–512 (VVMK…RVAP) and 590–617 (TEDD…PTLH). Over residues 477-499 (VMKERASPKGEEAKEDPKGHDRT) the composition is skewed to basic and acidic residues. In terms of domain architecture, Peptidase M14 spans 840–1130 (YPYTYSTLQM…KFCVGLLRLK (291 aa)). Zn(2+)-binding residues include His-912, Glu-915, and His-1009. Catalysis depends on Glu-1094, which acts as the Proton donor/acceptor. A Phosphoserine modification is found at Ser-1160. The interval 1193 to 1218 (ENTGDYEPSAQEEALSDSEVSRTHLI) is disordered.

It belongs to the peptidase M14 family. In terms of assembly, interacts with MYLK. The cofactor is Zn(2+). In terms of tissue distribution, widely expressed. Highly expressed in the cerebellum and cortex of adult mouse brain. Expressed at similar levels in both the cerebellum and the cortex throughout all developmental stages. Also expressed in sciatic nerve transection, spinal motor neurons undergoing axon regeneration, testis, heart, eye, lung, pancreas, intestine, stomach, pituitary, spleen, adrenal, kidney and in developing brain. Expression in cranial motor nuclei is the same as that observed in uninjured primary motor neurons. Expression is prevalent in sensory neurons and hippocampal CA3 neurons in addition to regenerating motor neurons.

It localises to the cytoplasm. The protein localises to the cytosol. Its subcellular location is the nucleus. It is found in the mitochondrion. It carries out the reaction (L-glutamyl)(n+1)-gamma-L-glutamyl-L-glutamyl-[protein] + H2O = (L-glutamyl)(n)-gamma-L-glutamyl-L-glutamyl-[protein] + L-glutamate. The enzyme catalyses C-terminal L-alpha-aminoacyl-L-glutamyl-L-glutamyl-[tubulin] + H2O = C-terminal L-alpha-aminoacyl-L-glutamyl-[tubulin] + L-glutamate. Its function is as follows. Metallocarboxypeptidase that mediates protein deglutamylation of tubulin and non-tubulin target proteins. Catalyzes the removal of polyglutamate side chains present on the gamma-carboxyl group of glutamate residues within the C-terminal tail of alpha- and beta-tubulin. Specifically cleaves tubulin long-side-chains, while it is not able to remove the branching point glutamate. Also catalyzes the removal of polyglutamate residues from the carboxy-terminus of alpha-tubulin as well as non-tubulin proteins such as MYLK. Involved in KLF4 deglutamylation which promotes KLF4 proteasome-mediated degradation, thereby negatively regulating cell pluripotency maintenance and embryogenesis. The polypeptide is Cytosolic carboxypeptidase 1 (Mus musculus (Mouse)).